A 336-amino-acid chain; its full sequence is Dihydroorotate dehydrogenase (quinone) (336 aa).

Residues 62–66 (AGLDK) and Thr-86 each bind FMN. Substrate is bound at residue Lys-66. Residue 111 to 115 (NRFGF) coordinates substrate. FMN is bound by residues Asn-139 and Asn-172. Asn-172 lines the substrate pocket. The Nucleophile role is filled by Ser-175. Asn-177 contributes to the substrate binding site. FMN-binding residues include Lys-217 and Thr-245. 246–247 (NT) lines the substrate pocket. FMN-binding positions include Gly-268, Gly-297, and 318–319 (YS).

The protein belongs to the dihydroorotate dehydrogenase family. Type 2 subfamily. Monomer. FMN is required as a cofactor.

It is found in the cell membrane. The catalysed reaction is (S)-dihydroorotate + a quinone = orotate + a quinol. Its pathway is pyrimidine metabolism; UMP biosynthesis via de novo pathway; orotate from (S)-dihydroorotate (quinone route): step 1/1. Its function is as follows. Catalyzes the conversion of dihydroorotate to orotate with quinone as electron acceptor. In Photobacterium profundum (strain SS9), this protein is Dihydroorotate dehydrogenase (quinone).